A 425-amino-acid chain; its full sequence is Xylose isomerase (425 aa).

Residues H101 and D104 contribute to the active site. Residues E232, E268, H271, D296, D307, D309, and D339 each coordinate Mg(2+).

It belongs to the xylose isomerase family. In terms of assembly, homotetramer. Requires Mg(2+) as cofactor.

The protein localises to the cytoplasm. It catalyses the reaction alpha-D-xylose = alpha-D-xylulofuranose. This is Xylose isomerase from Salmonella paratyphi A (strain ATCC 9150 / SARB42).